The sequence spans 315 residues: Tyrosine recombinase XerC (315 aa).

The 92-residue stretch at 14–105 (PDLLNERQSW…GLRSLLHHLQ (92 aa)) folds into the Core-binding (CB) domain. Residues 126 to 309 (SLPKPLTDRQ…DTARLLEIYD (184 aa)) enclose the Tyr recombinase domain. Active-site residues include arginine 169, lysine 193, histidine 261, arginine 264, and histidine 287. The active-site O-(3'-phospho-DNA)-tyrosine intermediate is tyrosine 296.

The protein belongs to the 'phage' integrase family. XerC subfamily. In terms of assembly, forms a cyclic heterotetrameric complex composed of two molecules of XerC and two molecules of XerD.

The protein resides in the cytoplasm. In terms of biological role, site-specific tyrosine recombinase, which acts by catalyzing the cutting and rejoining of the recombining DNA molecules. The XerC-XerD complex is essential to convert dimers of the bacterial chromosome into monomers to permit their segregation at cell division. It also contributes to the segregational stability of plasmids. This is Tyrosine recombinase XerC from Agrobacterium fabrum (strain C58 / ATCC 33970) (Agrobacterium tumefaciens (strain C58)).